The following is a 397-amino-acid chain: Endoglucanase (397 aa).

Glutamate 194 functions as the Proton donor in the catalytic mechanism. The active-site Nucleophile is the glutamate 317.

The protein belongs to the glycosyl hydrolase 5 (cellulase A) family.

The enzyme catalyses Endohydrolysis of (1-&gt;4)-beta-D-glucosidic linkages in cellulose, lichenin and cereal beta-D-glucans.. This chain is Endoglucanase, found in Paenibacillus polymyxa (Bacillus polymyxa).